The chain runs to 1168 residues: Transcription-repair-coupling factor (1168 aa).

Residues 633 to 794 (DMQKSRPMDR…MLGVRDLSVI (162 aa)) form the Helicase ATP-binding domain. Position 646–653 (646–653 (GDVGYGKT)) interacts with ATP. Residues 747–750 (DEEQ) carry the DEEQ box motif. One can recognise a Helicase C-terminal domain in the interval 808–969 (VLEQNMSFIK…GFKIAMRDLN (162 aa)).

It in the N-terminal section; belongs to the UvrB family. This sequence in the C-terminal section; belongs to the helicase family. RecG subfamily.

It is found in the cytoplasm. In terms of biological role, couples transcription and DNA repair by recognizing RNA polymerase (RNAP) stalled at DNA lesions. Mediates ATP-dependent release of RNAP and its truncated transcript from the DNA, and recruitment of nucleotide excision repair machinery to the damaged site. The protein is Transcription-repair-coupling factor of Staphylococcus aureus (strain bovine RF122 / ET3-1).